Reading from the N-terminus, the 106-residue chain is P4 prophage-derived uncharacterized protein t2655 (106 aa).

This Salmonella typhi protein is P4 prophage-derived uncharacterized protein t2655.